Reading from the N-terminus, the 307-residue chain is tRNA dimethylallyltransferase (307 aa).

16-23 (GCTAVGKT) is an ATP binding site. 18–23 (TAVGKT) contacts substrate. The interaction with substrate tRNA stretch occupies residues 41-44 (DSLL).

This sequence belongs to the IPP transferase family. In terms of assembly, monomer. Mg(2+) serves as cofactor.

The catalysed reaction is adenosine(37) in tRNA + dimethylallyl diphosphate = N(6)-dimethylallyladenosine(37) in tRNA + diphosphate. Its function is as follows. Catalyzes the transfer of a dimethylallyl group onto the adenine at position 37 in tRNAs that read codons beginning with uridine, leading to the formation of N6-(dimethylallyl)adenosine (i(6)A). The protein is tRNA dimethylallyltransferase of Opitutus terrae (strain DSM 11246 / JCM 15787 / PB90-1).